A 457-amino-acid polypeptide reads, in one-letter code: GTPase Der (457 aa).

EngA-type G domains follow at residues 4-169 (PTIA…PENN) and 177-352 (IMMS…NQHR). Residues 10–17 (GRPNVGKS), 57–61 (DTGGL), 120–123 (NKCE), 183–190 (GRPNVGKS), 230–234 (DTAGI), and 295–298 (NKWD) contribute to the GTP site. Positions 353 to 438 (RRVTTSVVNE…PLILLWRGKQ (86 aa)) constitute a KH-like domain.

This sequence belongs to the TRAFAC class TrmE-Era-EngA-EngB-Septin-like GTPase superfamily. EngA (Der) GTPase family. As to quaternary structure, associates with the 50S ribosomal subunit.

In terms of biological role, GTPase that plays an essential role in the late steps of ribosome biogenesis. The sequence is that of GTPase Der from Prochlorococcus marinus (strain AS9601).